Consider the following 165-residue polypeptide: Protein OPG091 (165 aa).

It belongs to the orthopoxvirus OPG091 family.

Its subcellular location is the virion. It is found in the host cytoplasm. Contributes to virulence in host but not to replication in cell culture. The chain is Protein OPG091 (OPG091) from Variola virus (isolate Human/India/Ind3/1967) (VARV).